The sequence spans 944 residues: Nonsense-mediated mRNA decay factor SMG8 (944 aa).

Disordered stretches follow at residues 560–597 (NTGK…QNTA) and 628–653 (QASS…DTEN). The segment covering 568–583 (QDEDAGEDEAEEEEGQ) has biased composition (acidic residues). Residues 628-650 (QASSEQLSNSEQNTTSSGTSSAD) are compositionally biased toward polar residues.

This sequence belongs to the SMG8 family.

In terms of biological role, involved in nonsense-mediated decay (NMD) of mRNAs containing premature stop codons. Probable component of kinase complex containing nonC and recruited to stalled ribosomes. This chain is Nonsense-mediated mRNA decay factor SMG8, found in Drosophila simulans (Fruit fly).